Consider the following 801-residue polypeptide: Glycerol-3-phosphate acyltransferase 2, mitochondrial (801 aa).

Residues 1–24 (METMLKSNPQMQQRNNHSGQETSL) form a disordered region. The Cytoplasmic portion of the chain corresponds to 1 to 305 (METMLKSNPQ…PGPRLSALGQ (305 aa)). Positions 180–290 (QLHKGQMKMV…SGQPLLIFLE (111 aa)) are acyltransferase. Residues 205-210 (HKSLLD) carry the HXXXXD motif motif. Residues 306 to 332 (AWLGLVVQAVQAGIVPDATLVPVATAY) traverse the membrane as a helical segment. Residues 333–449 (DLVPDAPCNM…QLLVRRLSRH (117 aa)) lie on the Mitochondrial intermembrane side of the membrane. Residues 450–472 (VLSASVASSAVMSTAIMATLLLL) form a helical membrane-spanning segment. At 473-795 (KHQKGVVLSQ…DNQDKLEQFI (323 aa)) the chain is on the cytoplasmic side.

This sequence belongs to the GPAT/DAPAT family. In terms of assembly, interacts with PIWIL2. Expressed in spermatocytes and spermatides.

It is found in the mitochondrion outer membrane. It carries out the reaction sn-glycerol 3-phosphate + an acyl-CoA = a 1-acyl-sn-glycero-3-phosphate + CoA. The catalysed reaction is a 1-acyl-sn-glycero-3-phosphate + an acyl-CoA = a 1,2-diacyl-sn-glycero-3-phosphate + CoA. It catalyses the reaction 1-(9Z-octadecenoyl)-sn-glycero-3-phosphate + (9Z)-octadecenoyl-CoA = 1,2-di-(9Z-octadecenoyl)-sn-glycero-3-phosphate + CoA. The enzyme catalyses 1-(9Z-octadecenoyl)-sn-glycero-3-phosphate + (5Z,8Z,11Z,14Z)-eicosatetraenoyl-CoA = 1-(9Z)-octadecenoyl-2-(5Z,8Z,11Z,14Z)-eicosatetraenoyl-sn-glycero-3-phosphate + CoA. It carries out the reaction (5Z,8Z,11Z,14Z)-eicosatetraenoyl-CoA + sn-glycerol 3-phosphate = 1-(5Z,8Z,11Z,14Z-eicosatetraenoyl)-sn-glycero-3-phosphate + CoA. Its pathway is phospholipid metabolism; CDP-diacylglycerol biosynthesis; CDP-diacylglycerol from sn-glycerol 3-phosphate: step 1/3. Inhibited by N-ethylmaleimide (NEM). Functionally, transfers an acyl-group from acyl-ACP to the sn-1 position of glycerol-3-phosphate producing a lysophosphatidic acid (LPA), an essential step for the triacylglycerol (TAG) and glycerophospholipids. In vitro also transfers an acyl-group from acyl-ACP to the LPA producing a phosphatidic acid (PA). Prefers arachidonoyl-CoA as the acyl donor. Required for primary processing step during piRNA biosynthesis. Molecular mechanisms by which it promotes piRNA biosynthesis are unclear and do not involve its acyltransferase activity. In Rattus norvegicus (Rat), this protein is Glycerol-3-phosphate acyltransferase 2, mitochondrial.